A 230-amino-acid polypeptide reads, in one-letter code: Bidirectional sugar transporter SWEET2b (230 aa).

The Extracellular segment spans residues 1 to 6; it reads MDSLYD. The chain crosses the membrane as a helical span at residues 7–27; sequence ISCFAAGLAGNIFALALFLSP. Residues 13 to 98 enclose the MtN3/slv 1 domain; sequence GLAGNIFALA…CLFIFYADSR (86 aa). Over 28 to 45 the chain is Cytoplasmic; sequence VTTFKRILKAKSTERFDG. A helical membrane pass occupies residues 46 to 66; it reads LPYLFSLLNCLICLWYGLPWV. Topologically, residues 67-72 are extracellular; it reads ADGRLL. The chain crosses the membrane as a helical span at residues 73-93; that stretch reads VATVNGIGAVFQLAYICLFIF. At 94–103 the chain is on the cytoplasmic side; it reads YADSRKTRMK. Residues 104–124 form a helical membrane-spanning segment; that stretch reads IIGLLVLVVCGFALVSHASVF. The Extracellular portion of the chain corresponds to 125–137; it reads FFDQPLRQQFVGA. The MtN3/slv 2 domain maps to 133–217; sequence QFVGAVSMAS…LALYAYYSRK (85 aa). The helical transmembrane segment at 138–158 threads the bilayer; the sequence is VSMASLISMFASPLAVMGVVI. The Cytoplasmic portion of the chain corresponds to 159-167; it reads RSESVEFMP. A helical transmembrane segment spans residues 168–188; that stretch reads FYLSLSTFLMSASFALYGLLL. The Extracellular segment spans residues 189–190; sequence RD. The chain crosses the membrane as a helical span at residues 191 to 211; that stretch reads FFIYFPNGLGLILGAMQLALY. Residues 212-230 lie on the Cytoplasmic side of the membrane; the sequence is AYYSRKWRGQDSSAPLLLA.

Belongs to the SWEET sugar transporter family. In terms of assembly, forms homooligomers and/or heterooligomers.

It is found in the cell membrane. In terms of biological role, mediates both low-affinity uptake and efflux of sugar across the plasma membrane. The chain is Bidirectional sugar transporter SWEET2b (SWEET2B) from Oryza sativa subsp. indica (Rice).